The primary structure comprises 630 residues: Zinc finger protein 37 homolog (630 aa).

3 disordered regions span residues 1-45 (MSVS…SAAE), 77-172 (KPDM…PSKK), and 193-285 (HSRN…KHEK). Residues 14-30 (ETVDRRRSAETTKEAGR) are compositionally biased toward basic and acidic residues. In terms of domain architecture, KRAB spans 32-103 (LEMAVSEPEA…KGKRPSQGCP (72 aa)). Residue Ser-42 is modified to Phosphoserine. Basic and acidic residues predominate over residues 110 to 122 (KQKETDGKVQKDD). A compositionally biased stretch (basic residues) spans 161 to 172 (NNLHKKHVPSKK). The segment covering 193–206 (HSRNCVKRKSDAAK) has biased composition (basic and acidic residues). A compositionally biased stretch (basic residues) spans 221–231 (KGKKQTGKKHE). 2 stretches are compositionally biased toward basic and acidic residues: residues 232–243 (KLSSHSSSDKCN) and 260–274 (IKQD…HEKS). C2H2-type zinc fingers lie at residues 293 to 315 (YECN…QRVH) and 321 to 343 (YECN…QRTH). A C2H2-type 3; atypical zinc finger spans residues 349–367 (YECIQCGKAHGHKHALTDH). 9 consecutive C2H2-type zinc fingers follow at residues 377–399 (YECA…VRSH), 405–427 (YECK…VRTH), 433–455 (YECN…MRIH), 461–483 (FECN…QRTH), 489–511 (YKCN…MRTH), 517–539 (FECN…QRVH), 545–567 (YECN…QRTH), 573–595 (YECN…QRSH), and 601–623 (YECN…VKTH).

The protein belongs to the krueppel C2H2-type zinc-finger protein family. In terms of tissue distribution, expressed at low level in several tissues including fetal cartilage.

It is found in the nucleus. Its function is as follows. May be involved in transcriptional regulation. In Homo sapiens (Human), this protein is Zinc finger protein 37 homolog (ZFP37).